We begin with the raw amino-acid sequence, 232 residues long: BTB/POZ domain-containing protein KCTD11 (232 aa).

The BTB domain maps to 1-49 (MLGAMFRAGTPMTPNLNPEGGGHYFIDRDGKAFRHILNFLRLGRLDLPL).

In terms of assembly, homopentamer. Interacts with KCTD6 and KCTD21; KCTD11 and KCTD6 or KCTD21 may associate in pentameric assemblies. Component of the BCR(KCTD11) E3 ubiquitin ligase complex, at least composed of CUL3 and KCTD11 and RBX1. Interacts (via BTB domain) with CUL3; initially a 4:4 stoichiometry has been reported, however, electron microscopy revealed pentameric states of the BTB domain.

The protein operates within protein modification; protein ubiquitination. Functionally, plays a role as a marker and a regulator of neuronal differentiation; Up-regulated by a variety of neurogenic signals, such as retinoic acid, epidermal growth factor/EGF and NGFB/nerve growth factor. Induces apoptosis, growth arrest and the expression of cyclin-dependent kinase inhibitor CDKN1B. Plays a role as a tumor repressor and inhibits cell growth and tumorigenicity of medulloblastoma (MDB). Acts as a probable substrate-specific adapter for a BCR (BTB-CUL3-RBX1) E3 ubiquitin-protein ligase complex towards HDAC1. Functions as antagonist of the Hedgehog pathway on cell proliferation and differentiation by affecting the nuclear transfer of transcription factor GLI1, thus maintaining cerebellar granule cells in undifferentiated state, this effect probably occurs via HDAC1 down-regulation, keeping GLI1 acetylated and inactive. The sequence is that of BTB/POZ domain-containing protein KCTD11 (KCTD11) from Bos taurus (Bovine).